The following is a 1878-amino-acid chain: Breast cancer type 1 susceptibility protein homolog (1878 aa).

Methionine 1 carries the post-translational modification N-acetylmethionine. The RING-type zinc-finger motif lies at 24-65 (CPICLELIKEPVSTKCDHIFCKFCMLKLLNQRKGPSQCPLCK). Lysine 109 participates in a covalent cross-link: Glycyl lysine isopeptide (Lys-Gly) (interchain with G-Cter in SUMO2). The residue at position 114 (serine 114) is a Phosphoserine. Lysine 298 is covalently cross-linked (Glycyl lysine isopeptide (Lys-Gly) (interchain with G-Cter in SUMO2)). A compositionally biased stretch (polar residues) spans 303-318 (NNSKQPGLARSQQSRW). The interval 303–329 (NNSKQPGLARSQQSRWAESKETCNDRQ) is disordered. Lysine 336 is covalently cross-linked (Glycyl lysine isopeptide (Lys-Gly) (interchain with G-Cter in SUMO2)). Positions 349–365 (ELNKQKPPHSDSPRDSQ) are enriched in basic and acidic residues. A disordered region spans residues 349-368 (ELNKQKPPHSDSPRDSQDVP). Residues serine 392, serine 395, serine 420, and serine 431 each carry the phosphoserine modification. Residues lysine 456, lysine 516, and lysine 581 each participate in a glycyl lysine isopeptide (Lys-Gly) (interchain with G-Cter in SUMO2) cross-link. Residues 548–614 (NNGPENETEG…KKNRLRRKSS (67 aa)) form a disordered region. Over residues 559–582 (YVQKEKNANPTESLEKESAFRTKT) the composition is skewed to basic and acidic residues. Positions 590 to 601 (SNMELELNSSSS) are enriched in low complexity. Positions 603-614 (APKKNRLRRKSS) are enriched in basic residues. Residues serine 692, serine 712, and serine 751 each carry the phosphoserine modification. Serine 987 is modified (phosphoserine; by CHEK2). Serine 1008 carries the post-translational modification Phosphoserine. A Glycyl lysine isopeptide (Lys-Gly) (interchain with G-Cter in SUMO2) cross-link involves residue lysine 1079. Disordered stretches follow at residues 1134-1154 (PEQPMGSSRSSQVCSETPDDL) and 1183-1221 (QSGEFSRSPSPSDHTRLAQGYQRGTKKLESSEENMSSEE). 2 stretches are compositionally biased toward polar residues: residues 1138–1148 (MGSSRSSQVCS) and 1183–1194 (QSGEFSRSPSPS). Phosphoserine is present on residues serine 1144, serine 1190, serine 1192, serine 1212, serine 1218, serine 1219, and serine 1281. The segment covering 1315 to 1325 (DPFSMFDPTSK) has biased composition (polar residues). Disordered regions lie at residues 1315-1401 (DPFS…TQQR) and 1419-1504 (EAVL…PSQS). Positions 1329 to 1343 (HQSENLDVLNDKELV) are enriched in basic and acidic residues. A phosphoserine mark is found at serine 1331, serine 1344, and serine 1391. The segment covering 1344–1369 (SDDDDEREPGLEEDSPQEEQSVDSDL) has biased composition (acidic residues). Residues 1377-1401 (ESETSLSEDCSRLSSQSDILTTQQR) are compositionally biased toward polar residues. Threonine 1398 is modified (phosphothreonine). The interaction with PALB2 stretch occupies residues 1401–1428 (RDTMQDNLIKLQQEMAELEAVLEQHESQ). Residues serine 1427 and serine 1460 each carry the phosphoserine modification. The span at 1465-1491 (DSPISQNPESLSTDKFQVFLDSSTSKN) shows a compositional bias: polar residues. Serine 1527 and serine 1545 each carry phosphoserine. The tract at residues 1570–1590 (GISLFSDDPESDPSSHRASEL) is disordered. BRCT domains are found at residues 1652-1739 (RISM…DFEV) and 1764-1863 (QDRK…TYLI). The tract at residues 1743–1764 (VVNGRNHQGPKRARESQDRESQ) is disordered. Over residues 1754 to 1764 (RARESQDRESQ) the composition is skewed to basic and acidic residues.

As to quaternary structure, heterodimer with BARD1. Part of the BRCA1-associated genome surveillance complex (BASC), which contains BRCA1, MSH2, MSH6, MLH1, ATM, BLM, PMS2 and the MRE11-RAD50-NBN protein (MRN) complex. This association could be a dynamic process changing throughout the cell cycle and within subnuclear domains. Component of the BRCA1-A complex, at least composed of BRCA1, BARD1, UIMC1/RAP80, ABRAXAS1, BRCC3/BRCC36, BABAM2 and BABAM1/NBA1. Interacts (via the BRCT domains) with ABRAXAS1 (phosphorylated form); this is important for recruitment to sites of DNA damage. Can form a heterotetramer with two molecules of ABRAXAS1 (phosphorylated form). Component of the BRCA1-RBBP8 complex. Interacts (via the BRCT domains) with RBBP8 ('Ser-327' phosphorylated form); the interaction ubiquitinates RBBP8, regulates CHEK1 activation, and involves RBBP8 in BRCA1-dependent G2/M checkpoint control on DNA damage. Associates with RNA polymerase II holoenzyme. Interacts with SMC1A, NELFB, DCLRE1C, CLSPN. CHEK1, CHEK2, BAP1, BRCC3, UBXN1 and PCLAF. Interacts (via BRCT domains) with BRIP1 (phosphorylated form). Interacts with FANCD2 (ubiquitinated form). Interacts with H2AX (phosphorylated on 'Ser-140'). Interacts (via the BRCT domains) with ACACA (phosphorylated form); the interaction prevents dephosphorylation of ACACA. Part of a BRCA complex containing BRCA1, BRCA2 and PALB2. Interacts directly with PALB2; the interaction is essential for its function in HRR. Interacts directly with BRCA2; the interaction occurs only in the presence of PALB2 which serves as the bridging protein. Interacts (via the BRCT domains) with LMO4; the interaction represses the transcriptional activity of BRCA1. Interacts (via the BRCT domains) with CCAR2 (via N-terminus); the interaction represses the transcriptional activator activity of BRCA1. Interacts with EXD2. Interacts (via C-terminus) with DHX9; this interaction is direct and links BRCA1 to the RNA polymerase II holoenzyme. Interacts with DNA helicase ZGRF1; the interaction is increased following DNA damage induction. Phosphorylated in response to IR, UV, and various stimuli that cause checkpoint activation, probably by ATM or ATR. Phosphorylation at Ser-987 by CHEK2 regulates mitotic spindle assembly. Phosphorylation by AURKA regulates centrosomal microtubule nucleation. Post-translationally, autoubiquitinated, undergoes 'Lys-6'-linked polyubiquitination. 'Lys-6'-linked polyubiquitination does not promote degradation.

The protein resides in the nucleus. Its subcellular location is the chromosome. It is found in the cytoplasm. The catalysed reaction is S-ubiquitinyl-[E2 ubiquitin-conjugating enzyme]-L-cysteine + [acceptor protein]-L-lysine = [E2 ubiquitin-conjugating enzyme]-L-cysteine + N(6)-ubiquitinyl-[acceptor protein]-L-lysine.. Its pathway is protein modification; protein ubiquitination. Its function is as follows. E3 ubiquitin-protein ligase that specifically mediates the formation of 'Lys-6'-linked polyubiquitin chains and plays a central role in DNA repair by facilitating cellular responses to DNA damage. It is unclear whether it also mediates the formation of other types of polyubiquitin chains. The BRCA1-BARD1 heterodimer coordinates a diverse range of cellular pathways such as DNA damage repair, ubiquitination and transcriptional regulation to maintain genomic stability. Regulates centrosomal microtubule nucleation. Required for appropriate cell cycle arrests after ionizing irradiation in both the S-phase and the G2 phase of the cell cycle. Required for FANCD2 targeting to sites of DNA damage. Inhibits lipid synthesis by binding to inactive phosphorylated ACACA and preventing its dephosphorylation. Contributes to homologous recombination repair (HRR) via its direct interaction with PALB2, fine-tunes recombinational repair partly through its modulatory role in the PALB2-dependent loading of BRCA2-RAD51 repair machinery at DNA breaks. Component of the BRCA1-RBBP8 complex which regulates CHEK1 activation and controls cell cycle G2/M checkpoints on DNA damage via BRCA1-mediated ubiquitination of RBBP8. Acts as a transcriptional activator. The chain is Breast cancer type 1 susceptibility protein homolog (BRCA1) from Canis lupus familiaris (Dog).